A 239-amino-acid chain; its full sequence is Ureidoacrylate amidohydrolase RutB (239 aa).

D35 acts as the Proton acceptor in catalysis. K144 is an active-site residue. C177 (nucleophile) is an active-site residue.

This sequence belongs to the isochorismatase family. RutB subfamily.

The enzyme catalyses (Z)-3-ureidoacrylate + H2O + H(+) = (Z)-3-aminoacrylate + NH4(+) + CO2. It carries out the reaction (Z)-3-ureidoacrylate + H2O = (Z)-3-aminoacrylate + carbamate + H(+). The catalysed reaction is (Z)-2-methylureidoacrylate + H2O + H(+) = (Z)-2-methylaminoacrylate + NH4(+) + CO2. In terms of biological role, hydrolyzes ureidoacrylate to form aminoacrylate and carbamate. The carbamate hydrolyzes spontaneously, thereby releasing one of the nitrogen atoms of the pyrimidine ring as ammonia and one of its carbon atoms as CO2. The protein is Ureidoacrylate amidohydrolase RutB of Caulobacter segnis (strain ATCC 21756 / DSM 7131 / JCM 7823 / NBRC 15250 / LMG 17158 / TK0059) (Mycoplana segnis).